We begin with the raw amino-acid sequence, 431 residues long: L-ornithine N(5)-monooxygenase (431 aa).

FAD contacts are provided by residues 40–48 and Q59; that span reads EKLPTFSWH. Substrate is bound at residue K64. Residues 202 to 205 and R228 each bind NADP(+); that span reads CGQS. Residues 242–245 and N273 contribute to the substrate site; that span reads NSLY. Residue 273–275 coordinates NADP(+); that stretch reads NYS. FAD is bound at residue 399–401; that stretch reads TLL. S402 lines the substrate pocket.

The protein belongs to the lysine N(6)-hydroxylase/L-ornithine N(5)-oxygenase family. Requires FAD as cofactor.

The protein resides in the cytoplasm. It is found in the nucleus. It carries out the reaction L-ornithine + NADPH + O2 = N(5)-hydroxy-L-ornithine + NADP(+) + H2O. It catalyses the reaction L-ornithine + NADH + O2 = N(5)-hydroxy-L-ornithine + NAD(+) + H2O. It functions in the pathway siderophore biosynthesis; ferrichrome biosynthesis. In terms of biological role, catalyzes the conversion of L-ornithine to N(5)-hydroxyornithine, the first step in the biosynthesis of all hydroxamate-containing siderophores, such as ferrichrome. This Schizosaccharomyces pombe (strain 972 / ATCC 24843) (Fission yeast) protein is L-ornithine N(5)-monooxygenase.